Reading from the N-terminus, the 194-residue chain is ATP-dependent Clp protease proteolytic subunit (194 aa).

The Nucleophile role is filled by Ser-97. His-122 is a catalytic residue.

The protein belongs to the peptidase S14 family. In terms of assembly, fourteen ClpP subunits assemble into 2 heptameric rings which stack back to back to give a disk-like structure with a central cavity, resembling the structure of eukaryotic proteasomes.

It is found in the cytoplasm. The catalysed reaction is Hydrolysis of proteins to small peptides in the presence of ATP and magnesium. alpha-casein is the usual test substrate. In the absence of ATP, only oligopeptides shorter than five residues are hydrolyzed (such as succinyl-Leu-Tyr-|-NHMec, and Leu-Tyr-Leu-|-Tyr-Trp, in which cleavage of the -Tyr-|-Leu- and -Tyr-|-Trp bonds also occurs).. In terms of biological role, cleaves peptides in various proteins in a process that requires ATP hydrolysis. Has a chymotrypsin-like activity. Plays a major role in the degradation of misfolded proteins. This is ATP-dependent Clp protease proteolytic subunit from Campylobacter jejuni subsp. jejuni serotype O:23/36 (strain 81-176).